Here is a 51-residue protein sequence, read N- to C-terminus: Large ribosomal subunit protein eL39 (51 aa).

The disordered stretch occupies residues 1-22 (MAAQKSFRIKQKMAKAKKQNRP). Residues 7–20 (FRIKQKMAKAKKQN) show a composition bias toward basic residues.

Belongs to the eukaryotic ribosomal protein eL39 family. In terms of assembly, component of the large ribosomal subunit (LSU). Mature yeast ribosomes consist of a small (40S) and a large (60S) subunit. The 40S small subunit contains 1 molecule of ribosomal RNA (18S rRNA) and 33 different proteins (encoded by 57 genes). The large 60S subunit contains 3 rRNA molecules (25S, 5.8S and 5S rRNA) and 46 different proteins (encoded by 81 genes). eL39 interacts with YIH1.

The protein resides in the cytoplasm. In terms of biological role, component of the ribosome, a large ribonucleoprotein complex responsible for the synthesis of proteins in the cell. The small ribosomal subunit (SSU) binds messenger RNAs (mRNAs) and translates the encoded message by selecting cognate aminoacyl-transfer RNA (tRNA) molecules. The large subunit (LSU) contains the ribosomal catalytic site termed the peptidyl transferase center (PTC), which catalyzes the formation of peptide bonds, thereby polymerizing the amino acids delivered by tRNAs into a polypeptide chain. The nascent polypeptides leave the ribosome through a tunnel in the LSU and interact with protein factors that function in enzymatic processing, targeting, and the membrane insertion of nascent chains at the exit of the ribosomal tunnel. The protein is Large ribosomal subunit protein eL39 of Saccharomyces cerevisiae (strain ATCC 204508 / S288c) (Baker's yeast).